Here is a 426-residue protein sequence, read N- to C-terminus: Serine--tRNA ligase (426 aa).

L-serine is bound at residue 233-235 (TAE). Position 264 to 266 (264 to 266 (RSE)) interacts with ATP. L-serine is bound at residue E287. Position 351–354 (351–354 (EISS)) interacts with ATP. S387 is a binding site for L-serine.

This sequence belongs to the class-II aminoacyl-tRNA synthetase family. Type-1 seryl-tRNA synthetase subfamily. In terms of assembly, homodimer. The tRNA molecule binds across the dimer.

The protein localises to the cytoplasm. The catalysed reaction is tRNA(Ser) + L-serine + ATP = L-seryl-tRNA(Ser) + AMP + diphosphate + H(+). The enzyme catalyses tRNA(Sec) + L-serine + ATP = L-seryl-tRNA(Sec) + AMP + diphosphate + H(+). The protein operates within aminoacyl-tRNA biosynthesis; selenocysteinyl-tRNA(Sec) biosynthesis; L-seryl-tRNA(Sec) from L-serine and tRNA(Sec): step 1/1. In terms of biological role, catalyzes the attachment of serine to tRNA(Ser). Is also able to aminoacylate tRNA(Sec) with serine, to form the misacylated tRNA L-seryl-tRNA(Sec), which will be further converted into selenocysteinyl-tRNA(Sec). This is Serine--tRNA ligase from Ectopseudomonas mendocina (strain ymp) (Pseudomonas mendocina).